An 895-amino-acid polypeptide reads, in one-letter code: Ral guanine nucleotide dissociation stimulator (895 aa).

The 126-residue stretch at 112 to 237 folds into the N-terminal Ras-GEF domain; it reads KVRTVKAGTL…RAHLLLAQLE (126 aa). The tract at residues 301 to 324 is disordered; the sequence is SELEPALEPPLDPEPTLAPAPELD. Pro residues predominate over residues 307–318; sequence LEPPLDPEPTLA. The Ras-GEF domain maps to 367 to 629; that stretch reads PPDLVAEQFT…YNLSCELEPP (263 aa). Disordered regions lie at residues 650–669 and 708–754; these read ERRQ…HSKS and VPES…STTR. Composition is skewed to low complexity over residues 656–667 and 726–753; these read STELSTSSSAHS and SSPE…VSTT. The 88-residue stretch at 779-866 folds into the Ras-associating domain; sequence DCCIIRVSLD…YDFILKKRAF (88 aa). A Phosphotyrosine modification is found at Tyr-795.

In terms of assembly, interacts with RIT1 and RIT2. Interacts with TRAF3. Interacts with HRAS. In terms of processing, phosphorylation of Tyr-795 by MET blocks HRAS binding. Expressed in all tissues examined.

Its subcellular location is the cytoplasm. It is found in the nucleus. In terms of biological role, functions as a guanine nucleotide exchange factor (GEF) activating either RalA or RalB GTPases and plays an important role in intracellular transport. Interacts and acts as an effector molecule for R-Ras, H-Ras, K-Ras, and Rap. During bacterial clearance, recognizes 'Lys-33'-linked polyubiquitinated TRAF3 and subsequently mediates assembly of the exocyst complex. The sequence is that of Ral guanine nucleotide dissociation stimulator (Ralgds) from Rattus norvegicus (Rat).